The primary structure comprises 48 residues: Piguamerin (48 aa).

5 disulfides stabilise this stretch: cysteine 3-cysteine 14, cysteine 8-cysteine 19, cysteine 21-cysteine 41, cysteine 26-cysteine 45, and cysteine 30-cysteine 47. Residues 19–47 (CVCVIGQCRKYCPNGFKKDENGCTFPCTC) enclose the Antistasin-like domain.

The protein belongs to the protease inhibitor I15 (antistasin) family.

The protein localises to the secreted. In terms of biological role, inhibits plasma and tissue kallikrein, and trypsin. May be involved in leech hematophagia. This is Piguamerin from Hirudo nipponia (Korean blood-sucking leech).